Here is a 346-residue protein sequence, read N- to C-terminus: MTKVSILGAGSWGTALALVLADNQYDVCIWGHREELIQQINEHHENKDYLPGVKLSENVRATTDLEAAVADVKTIIVAVPTKAIREVLAQAVSFINQKAIFVHVSKGIEPDTLLRISEMMKEEIPAELREDIVVLSGPSHAEEVGLRHPTTVTVSADSSIESAQAIQDMFMNQNFRVYTNPDMIGVEIGGALKNVIALAAGITDGLGYGDNAKAALITRGLAEIARLGTKMGGNPLTFSGLTGIGDLIVTCTSVHSRNWRAGNMLGKGFKLDEVLEEMGMVVEGVRTTKAAYQLSKKFDVKMPITEALHKVLFDGEKVETAVESLMARVKTHEMEDLVNTFENQMK.

Positions 11, 12, 32, 33, and 106 each coordinate NADPH. The sn-glycerol 3-phosphate site is built by Lys106, Gly137, and Ser139. Ala141 contacts NADPH. 5 residues coordinate sn-glycerol 3-phosphate: Lys193, Asp246, Ser256, Arg257, and Asn258. Lys193 functions as the Proton acceptor in the catalytic mechanism. Residue Arg257 participates in NADPH binding. Positions 281 and 283 each coordinate NADPH.

This sequence belongs to the NAD-dependent glycerol-3-phosphate dehydrogenase family.

The protein resides in the cytoplasm. The catalysed reaction is sn-glycerol 3-phosphate + NAD(+) = dihydroxyacetone phosphate + NADH + H(+). It carries out the reaction sn-glycerol 3-phosphate + NADP(+) = dihydroxyacetone phosphate + NADPH + H(+). It participates in membrane lipid metabolism; glycerophospholipid metabolism. Catalyzes the reduction of the glycolytic intermediate dihydroxyacetone phosphate (DHAP) to sn-glycerol 3-phosphate (G3P), the key precursor for phospholipid synthesis. In Bacillus licheniformis (strain ATCC 14580 / DSM 13 / JCM 2505 / CCUG 7422 / NBRC 12200 / NCIMB 9375 / NCTC 10341 / NRRL NRS-1264 / Gibson 46), this protein is Glycerol-3-phosphate dehydrogenase [NAD(P)+].